Here is a 154-residue protein sequence, read N- to C-terminus: MTKETQLQVEAIKNGSVIDHIPANVGIKVLKLFKLHKTNQRVTIGLNLPSSAMGAKDLIKIENVYVSEEQANQLALYAPHATVNQIENYDVAKKLTLELPKKINAIFECPNSNCITHNEPVDSSFTVINKNDDIQLKCKYCEKVFSREIVTERN.

Zn(2+) contacts are provided by C109, C114, C138, and C141.

Belongs to the PyrI family. In terms of assembly, contains catalytic and regulatory chains. Requires Zn(2+) as cofactor.

Functionally, involved in allosteric regulation of aspartate carbamoyltransferase. This chain is Aspartate carbamoyltransferase regulatory chain, found in Photobacterium profundum (strain SS9).